A 298-amino-acid polypeptide reads, in one-letter code: METQRLRIAMQKSGRLSQDSQALFKSCGLKINLREQRLIAHVENMPIDILRVRDDDIPGLVMEGVVDLGIIGENVLEEAQLIRASQGLPAQVKTLKQLDFGGCRLSLAVPDDVAYTGPESLAGKRIATSYPGLLKRFFDEKGLNFKSVMLGGSVEVAPRAGLADAICDLVSTGATLEANGLKEVEVIYRSKAVLVQAPNPLNEAKQKLIDKLLPRIQGMQQARESKYIMLHAPKDKLDAITDLLPGAERPTIMQLAGDTNQVALHVVSSETLFWETMEQLKALGASSILVLPIEKMME.

It belongs to the ATP phosphoribosyltransferase family. Long subfamily. Requires Mg(2+) as cofactor.

The protein localises to the cytoplasm. It carries out the reaction 1-(5-phospho-beta-D-ribosyl)-ATP + diphosphate = 5-phospho-alpha-D-ribose 1-diphosphate + ATP. It participates in amino-acid biosynthesis; L-histidine biosynthesis; L-histidine from 5-phospho-alpha-D-ribose 1-diphosphate: step 1/9. Feedback inhibited by histidine. Functionally, catalyzes the condensation of ATP and 5-phosphoribose 1-diphosphate to form N'-(5'-phosphoribosyl)-ATP (PR-ATP). Has a crucial role in the pathway because the rate of histidine biosynthesis seems to be controlled primarily by regulation of HisG enzymatic activity. This chain is ATP phosphoribosyltransferase, found in Aeromonas salmonicida (strain A449).